The following is a 336-amino-acid chain: Galactose/methyl galactoside import permease protein MglC (336 aa).

9 helical membrane passes run 17–37 (GIYV…PTFL), 53–73 (IIIA…LSAG), 107–127 (LVIL…GIII), 128–148 (AYLN…VYGI), 181–201 (FRLS…WVLW), 227–247 (VALN…FGGL), 257–277 (TNNL…VGGV), 279–299 (FSGG…FTVI), and 306–326 (IGVN…FAVA).

This sequence belongs to the binding-protein-dependent transport system permease family. AraH/RbsC subfamily. In terms of assembly, the complex is composed of one ATP-binding protein (MglA), two transmembrane proteins (MglC) and a solute-binding protein (MglB).

It is found in the cell inner membrane. Functionally, part of the ABC transporter complex MglABC involved in galactose/methyl galactoside import. Probably responsible for the translocation of the substrate across the membrane. The polypeptide is Galactose/methyl galactoside import permease protein MglC (mglC) (Salmonella typhimurium (strain LT2 / SGSC1412 / ATCC 700720)).